Consider the following 141-residue polypeptide: Hemoglobin subunit alpha-1 (141 aa).

The Globin domain occupies 1 to 141; it reads VLTDAEKKEV…VATVLTSKYR (141 aa). His-58 is an O2 binding site. His-87 contacts heme b.

Belongs to the globin family. In terms of assembly, heterotetramer of two alpha chains and two beta chains. In terms of tissue distribution, red blood cells.

Its function is as follows. Involved in oxygen transport from the lung to the various peripheral tissues. The protein is Hemoglobin subunit alpha-1 of Tachyglossus aculeatus aculeatus (Southeast Australian short-beaked echidna).